The primary structure comprises 154 residues: Sec-independent protein translocase protein TatB (154 aa).

Residues 1–21 (MIDIGITKLAIIGGIALIVIG) form a helical membrane-spanning segment.

Belongs to the TatB family. The Tat system comprises two distinct complexes: a TatABC complex, containing multiple copies of TatA, TatB and TatC subunits, and a separate TatA complex, containing only TatA subunits. Substrates initially bind to the TatABC complex, which probably triggers association of the separate TatA complex to form the active translocon.

It localises to the cell inner membrane. In terms of biological role, part of the twin-arginine translocation (Tat) system that transports large folded proteins containing a characteristic twin-arginine motif in their signal peptide across membranes. Together with TatC, TatB is part of a receptor directly interacting with Tat signal peptides. TatB may form an oligomeric binding site that transiently accommodates folded Tat precursor proteins before their translocation. This chain is Sec-independent protein translocase protein TatB, found in Albidiferax ferrireducens (strain ATCC BAA-621 / DSM 15236 / T118) (Rhodoferax ferrireducens).